Here is a 306-residue protein sequence, read N- to C-terminus: Light-independent protochlorophyllide reductase iron-sulfur ATP-binding protein (306 aa).

Residues 1–31 (MREAAGLEARGLKSPPILKGQDGEGSLQVHQ) are disordered. ATP contacts are provided by residues 50–55 (GIGKST) and Lys79. Ser54 lines the Mg(2+) pocket. Residues Cys135 and Cys169 each contribute to the [4Fe-4S] cluster site. Residue 220 to 221 (NR) participates in ATP binding.

The protein belongs to the NifH/BchL/ChlL family. In terms of assembly, homodimer. Protochlorophyllide reductase is composed of three subunits; BchL, BchN and BchB. The cofactor is [4Fe-4S] cluster.

The enzyme catalyses chlorophyllide a + oxidized 2[4Fe-4S]-[ferredoxin] + 2 ADP + 2 phosphate = protochlorophyllide a + reduced 2[4Fe-4S]-[ferredoxin] + 2 ATP + 2 H2O. The protein operates within porphyrin-containing compound metabolism; bacteriochlorophyll biosynthesis (light-independent). Component of the dark-operative protochlorophyllide reductase (DPOR) that uses Mg-ATP and reduced ferredoxin to reduce ring D of protochlorophyllide (Pchlide) to form chlorophyllide a (Chlide). This reaction is light-independent. The L component serves as a unique electron donor to the NB-component of the complex, and binds Mg-ATP. This Jannaschia sp. (strain CCS1) protein is Light-independent protochlorophyllide reductase iron-sulfur ATP-binding protein.